The following is a 204-amino-acid chain: Large ribosomal subunit protein eL15z (204 aa).

A disordered region spans residues 161–204 (LRGLTSEGKKNRGLRGKGHNNHKNRPSRRATWKKNNSLSLRRYR). Positions 171-192 (NRGLRGKGHNNHKNRPSRRATW) are enriched in basic residues. Polar residues predominate over residues 193-204 (KKNNSLSLRRYR).

Belongs to the eukaryotic ribosomal protein eL15 family.

The polypeptide is Large ribosomal subunit protein eL15z (RPL15A) (Arabidopsis thaliana (Mouse-ear cress)).